Consider the following 980-residue polypeptide: Envelope glycoprotein B (980 aa).

Over residues 1–14 the composition is skewed to polar residues; the sequence is MSSGCRSVGGSTWG. Disordered stretches follow at residues 1-20 and 88-118; these read MSSG…RGDG and TTPS…TETP. The first 86 residues, 1–86, serve as a signal peptide directing secretion; that stretch reads MSSGCRSVGG…LFGSCVVRAV (86 aa). Topologically, residues 87–849 are virion surface; it reads PTTPSPPTST…SGIASFLNNP (763 aa). Residues 96 to 118 are compositionally biased toward low complexity; sequence TPTSMSTHSHGTVDPTLLPTETP. 5 disulfide bridges follow: Cys140-Cys647, Cys157-Cys603, Cys231-Cys296, Cys389-Cys437, and Cys668-Cys708. N-linked (GlcNAc...) asparagine; by host glycosylation is present at Asn165. Residues 197 to 203 form an involved in fusion and/or binding to host membrane region; that stretch reads VWKGYSH. Asn275 carries N-linked (GlcNAc...) asparagine; by host glycosylation. The segment at 282–290 is involved in fusion and/or binding to host membrane; sequence GWMPWRHYT. N-linked (GlcNAc...) asparagine; by host glycans are attached at residues Asn380, Asn423, Asn497, Asn514, Asn515, and Asn560. Positions 505–516 are enriched in low complexity; it reads LLNPNANNNNNT. The tract at residues 505–535 is disordered; the sequence is LLNPNANNNNNTTRRRRSLLSVPEPQPTQDG. N-linked (GlcNAc...) asparagine; by host glycans are attached at residues Asn727 and Asn749. 2 hydrophobic membrane proximal region regions span residues 794–847 and 823–843; these read IDSV…SFLN and AVGT…SGIA. A helical membrane pass occupies residues 850–870; that stretch reads FGGLAIGLLVIAGLVAAFFAY. At 871-980 the chain is on the intravirion side; the sequence is RYVMQIRSNP…NDTMENEKMV (110 aa). Residues 925–928 carry the Golgi targeting motif; it reads YMSM. Asn952 carries an N-linked (GlcNAc...) asparagine; by host glycan. Residues 965–968 carry the Internalization motif motif; it reads YTRL. An N-linked (GlcNAc...) asparagine; by host glycan is attached at Asn971.

Belongs to the herpesviridae glycoprotein B family. In terms of assembly, homotrimer; disulfide-linked. Binds to heparan sulfate proteoglycans. Interacts with gH/gL heterodimer. Post-translationally, a proteolytic cleavage by host furin generates two subunits that remain linked by disulfide bonds.

It is found in the virion membrane. The protein localises to the host cell membrane. The protein resides in the host endosome membrane. Its subcellular location is the host Golgi apparatus membrane. Functionally, envelope glycoprotein that forms spikes at the surface of virion envelope. Essential for the initial attachment to heparan sulfate moieties of the host cell surface proteoglycans. Involved in fusion of viral and cellular membranes leading to virus entry into the host cell. Following initial binding to its host receptors, membrane fusion is mediated by the fusion machinery composed at least of gB and the heterodimer gH/gL. May be involved in the fusion between the virion envelope and the outer nuclear membrane during virion egress. This is Envelope glycoprotein B from Equine herpesvirus 1 (strain HVS25A) (EHV-1).